Reading from the N-terminus, the 27-residue chain is Protamine-B (27 aa).

Residues 1–27 (ARRRRRSSRPQRRRRRRRHGRRRRGRR) are disordered.

Testis.

Its subcellular location is the nucleus. It is found in the chromosome. Its function is as follows. Protamines substitute for histones in the chromatin of sperm during the haploid phase of spermatogenesis. They compact sperm DNA into a highly condensed, stable and inactive complex. In Acipenser stellatus (Sevruga), this protein is Protamine-B.